Here is an 874-residue protein sequence, read N- to C-terminus: Endothelial PAS domain-containing protein 1 (874 aa).

The interval 1-23 (MTADKEKKRSSSELRKEKSRDAA) is disordered. One can recognise a bHLH domain in the interval 14–67 (LRKEKSRDAARCRRSKETEVFYELAHELPLPHSVSSHLDKASIMRLAISFLRTH). A DNA-binding region spans residues 26–53 (RRSKETEVFYELAHELPLPHSVSSHLDK). Residues 84–154 (DQQMDNLYLK…ENLTLKNGSG (71 aa)) form the PAS 1 domain. The interval 171–192 (RMKCTVTNRGRTVNLKSATWKV) is required for heterodimer formation with ARNT. The PAS 2 domain maps to 230-300 (QHPSHMDIPL…KSHQNLCTKG (71 aa)). The 44-residue stretch at 304 to 347 (SGQYRMLAKHGGYVWLETQGTVIYNPRNLQPQCIMCVNYVLSEI) folds into the PAC domain. Position 405 is a 4-hydroxyproline (Pro405). Residues 438 to 489 (WVSGLRSHSAQSESGSLPAFTVPQADTPGNTTPSASSSSSCSTPSSPEDYYS) form a disordered region. The segment covering 443–452 (RSHSAQSESG) has biased composition (polar residues). Low complexity predominate over residues 464 to 484 (TPGNTTPSASSSSSCSTPSSP). Positions 495-541 (LKIEVIEKLFAMDTEPRDPGSTQTDFSELDLETLAPYIPMDGEDFQL) are NTAD. Position 530 is a 4-hydroxyproline (Pro530). The segment at 777–803 (LGQPLRHLPPPQPPSTRSSGENAKTGF) is disordered. The tract at residues 834-874 (SFEPYLLPELTRYDCEVNVPVPGSSTLLQGRDLLRALDQAT) is CTAD. Thr844 bears the Phosphothreonine mark. Residue Asn851 is modified to (3S)-3-hydroxyasparagine.

Interacts with HIF3A isoform 2. Efficient DNA binding requires dimerization with another bHLH protein. Heterodimerizes with ARNT; heterodimer binds to core DNA sequence 5'-TACGTG-3' within the hypoxia response element (HRE) of target gene promoters. Interacts with CREBBP. Interacts with EGLN1. Interacts with VHL. In normoxia, is probably hydroxylated on Pro-405 and Pro-530 by EGLN1/PHD1, EGLN2/PHD2 and/or EGLN3/PHD3. The hydroxylated prolines promote interaction with VHL, initiating rapid ubiquitination and subsequent proteasomal degradation. Under hypoxia, proline hydroxylation is impaired and ubiquitination is attenuated, resulting in stabilization. Post-translationally, in normoxia, is hydroxylated on Asn-851 by HIF1AN thus probably abrogating interaction with CREBBP and EP300 and preventing transcriptional activation. In terms of processing, phosphorylated on multiple sites in the CTAD. The iron and 2-oxoglutarate dependent 3-hydroxylation of asparagine is (S) stereospecific within HIF CTAD domains. Expressed in most tissues, with highest levels in lung, followed by heart, kidney, brain and liver. Predominantly expressed in endothelial cells. Also found in smooth muscle cells of the uterus, neurons, and brown adipose tissue. High expression in embryonic choroid plexus and kidney glomeruli.

It is found in the nucleus. Its subcellular location is the nucleus speckle. In terms of biological role, transcription factor involved in the induction of oxygen regulated genes. Heterodimerizes with ARNT; heterodimer binds to core DNA sequence 5'-TACGTG-3' within the hypoxia response element (HRE) of target gene promoters. Regulates the vascular endothelial growth factor (VEGF) expression and seems to be implicated in the development of blood vessels and the tubular system of lung. May also play a role in the formation of the endothelium that gives rise to the blood brain barrier. Potent activator of the Tie-2 tyrosine kinase expression. Activation requires recruitment of transcriptional coactivators such as CREBBP and probably EP300. Interaction with redox regulatory protein APEX seems to activate CTAD. The polypeptide is Endothelial PAS domain-containing protein 1 (Epas1) (Mus musculus (Mouse)).